Here is a 190-residue protein sequence, read N- to C-terminus: 7-methyl-GTP pyrophosphatase (190 aa).

Asp-69 acts as the Proton acceptor in catalysis.

The protein belongs to the Maf family. YceF subfamily. The cofactor is a divalent metal cation.

It localises to the cytoplasm. The catalysed reaction is N(7)-methyl-GTP + H2O = N(7)-methyl-GMP + diphosphate + H(+). Nucleoside triphosphate pyrophosphatase that hydrolyzes 7-methyl-GTP (m(7)GTP). May have a dual role in cell division arrest and in preventing the incorporation of modified nucleotides into cellular nucleic acids. This is 7-methyl-GTP pyrophosphatase from Xanthomonas oryzae pv. oryzae (strain MAFF 311018).